A 117-amino-acid chain; its full sequence is Holo-[acyl-carrier-protein] synthase (117 aa).

Asp8 and Glu58 together coordinate Mg(2+).

It belongs to the P-Pant transferase superfamily. AcpS family. It depends on Mg(2+) as a cofactor.

The protein localises to the cytoplasm. The enzyme catalyses apo-[ACP] + CoA = holo-[ACP] + adenosine 3',5'-bisphosphate + H(+). Functionally, transfers the 4'-phosphopantetheine moiety from coenzyme A to a Ser of acyl-carrier-protein. The polypeptide is Holo-[acyl-carrier-protein] synthase (Shouchella clausii (strain KSM-K16) (Alkalihalobacillus clausii)).